The following is a 465-amino-acid chain: Ribulose bisphosphate carboxylase large chain (465 aa).

Residue Lys4 is modified to N6,N6,N6-trimethyllysine. 2 residues coordinate substrate: Asn113 and Thr163. The active-site Proton acceptor is the Lys165. Residue Lys167 participates in substrate binding. Lys191, Asp193, and Glu194 together coordinate Mg(2+). An N6-carboxylysine modification is found at Lys191. His284 serves as the catalytic Proton acceptor. Arg285, His317, and Ser369 together coordinate substrate.

It belongs to the RuBisCO large chain family. Type I subfamily. As to quaternary structure, heterohexadecamer of 8 large chains and 8 small chains; disulfide-linked. The disulfide link is formed within the large subunit homodimers. Mg(2+) serves as cofactor. Post-translationally, the disulfide bond which can form in the large chain dimeric partners within the hexadecamer appears to be associated with oxidative stress and protein turnover.

It localises to the plastid. It is found in the chloroplast. It catalyses the reaction 2 (2R)-3-phosphoglycerate + 2 H(+) = D-ribulose 1,5-bisphosphate + CO2 + H2O. The enzyme catalyses D-ribulose 1,5-bisphosphate + O2 = 2-phosphoglycolate + (2R)-3-phosphoglycerate + 2 H(+). In terms of biological role, ruBisCO catalyzes two reactions: the carboxylation of D-ribulose 1,5-bisphosphate, the primary event in carbon dioxide fixation, as well as the oxidative fragmentation of the pentose substrate in the photorespiration process. Both reactions occur simultaneously and in competition at the same active site. The protein is Ribulose bisphosphate carboxylase large chain of Ailanthus altissima (Tree-of-heaven).